The primary structure comprises 508 residues: Steroid 17-alpha-hydroxylase/17,20 lyase (508 aa).

Cys445 is a heme binding site.

This sequence belongs to the cytochrome P450 family. The cofactor is heme.

It localises to the membrane. The catalysed reaction is a C21-steroid + reduced [NADPH--hemoprotein reductase] + O2 = a 17alpha-hydroxy-C21-steroid + oxidized [NADPH--hemoprotein reductase] + H2O + H(+). It carries out the reaction 17alpha-hydroxyprogesterone + reduced [NADPH--hemoprotein reductase] + O2 = androst-4-ene-3,17-dione + acetate + oxidized [NADPH--hemoprotein reductase] + H2O + 2 H(+). It catalyses the reaction 17alpha-hydroxypregnenolone + reduced [NADPH--hemoprotein reductase] + O2 = 3beta-hydroxyandrost-5-en-17-one + acetate + oxidized [NADPH--hemoprotein reductase] + H2O + 2 H(+). It functions in the pathway lipid metabolism; steroid biosynthesis. In terms of biological role, conversion of pregnenolone and progesterone to their 17-alpha-hydroxylated products and subsequently to dehydroepiandrosterone (DHEA) and androstenedione. Catalyzes both the 17-alpha-hydroxylation and the 17,20-lyase reaction. The protein is Steroid 17-alpha-hydroxylase/17,20 lyase (CYP17A1) of Gallus gallus (Chicken).